A 190-amino-acid polypeptide reads, in one-letter code: MDNQFIFKYSWETLPKKWVKKMERSEHGNRFDTNTDYLFQLLCFMKLHTYTRVQVLIDICGVDYPSRKQRFEVVYNLLSIRYNSRIRVQTSADEVTRISSVVSLFPSAGWWEREVWDMFGVFSINHPDLRRILTDYGFEGHPLRKDFPLSGYVEVRYDDPEKRVVSEPIEMTQEFRYFDFASPWEQRSDG.

The protein belongs to the complex I 30 kDa subunit family. In terms of assembly, complex I is composed of about 45 different subunits. This is a component of the iron-sulfur (IP) fragment of the enzyme.

Its subcellular location is the mitochondrion inner membrane. The catalysed reaction is a ubiquinone + NADH + 5 H(+)(in) = a ubiquinol + NAD(+) + 4 H(+)(out). In terms of biological role, core subunit of the mitochondrial membrane respiratory chain NADH dehydrogenase (Complex I) that is believed to belong to the minimal assembly required for catalysis. Complex I functions in the transfer of electrons from NADH to the respiratory chain. The immediate electron acceptor for the enzyme is believed to be ubiquinone. This is NADH dehydrogenase [ubiquinone] iron-sulfur protein 3 (NAD9) from Solanum tuberosum (Potato).